The primary structure comprises 350 residues: Probable dual-specificity RNA methyltransferase RlmN (350 aa).

E91 acts as the Proton acceptor in catalysis. Residues 97 to 327 enclose the Radical SAM core domain; it reads YHHGNSVCIS…VTIRREMGRD (231 aa). The cysteines at positions 104 and 332 are disulfide-linked. Residues C111, C115, and C118 each contribute to the [4Fe-4S] cluster site. Residues 158–159, S190, 213–215, and N289 contribute to the S-adenosyl-L-methionine site; these read GE and SLH. C332 (S-methylcysteine intermediate) is an active-site residue.

This sequence belongs to the radical SAM superfamily. RlmN family. Requires [4Fe-4S] cluster as cofactor.

It localises to the cytoplasm. It carries out the reaction adenosine(2503) in 23S rRNA + 2 reduced [2Fe-2S]-[ferredoxin] + 2 S-adenosyl-L-methionine = 2-methyladenosine(2503) in 23S rRNA + 5'-deoxyadenosine + L-methionine + 2 oxidized [2Fe-2S]-[ferredoxin] + S-adenosyl-L-homocysteine. The catalysed reaction is adenosine(37) in tRNA + 2 reduced [2Fe-2S]-[ferredoxin] + 2 S-adenosyl-L-methionine = 2-methyladenosine(37) in tRNA + 5'-deoxyadenosine + L-methionine + 2 oxidized [2Fe-2S]-[ferredoxin] + S-adenosyl-L-homocysteine. Specifically methylates position 2 of adenine 2503 in 23S rRNA and position 2 of adenine 37 in tRNAs. The polypeptide is Probable dual-specificity RNA methyltransferase RlmN (Lachnospira eligens (strain ATCC 27750 / DSM 3376 / VPI C15-48 / C15-B4) (Eubacterium eligens)).